The sequence spans 90 residues: Glycine and tyrosine-rich protein (90 aa).

The N-terminal stretch at 1-21 (MRRSVLVVFLVLAVTNVAVEA) is a signal peptide.

As to expression, prismatic layer of shell (at protein level).

It localises to the secreted. This is Glycine and tyrosine-rich protein from Pinctada maxima (Silver-lipped pearl oyster).